The following is a 1806-amino-acid chain: Atrochrysone carboxylic acid synthase (1806 aa).

The N-terminal acylcarrier protein transacylase domain (SAT) stretch occupies residues 30 to 283; that stretch reads DLQGLFRRLY…SLPVYSGLCH (254 aa). The Ketosynthase family 3 (KS3) domain occupies 416–850; that stretch reads QSKIAIIGMS…GGNTTVCLEE (435 aa). Catalysis depends on for beta-ketoacyl synthase activity residues C589, H725, and H768. Residues 951–1270 are malonyl-CoA:ACP transacylase (MAT) domain; sequence FAFTGQGASY…SLTALHCAGV (320 aa). The product template (PT) domain stretch occupies residues 1340-1659; the sequence is TSTVQQIIEE…RILLNRFFTA (320 aa). The segment at 1344 to 1479 is N-terminal hotdog fold; sequence QQIIEESFNG…ASILYDDAAL (136 aa). The 311-residue stretch at 1344 to 1654 folds into the PKS/mFAS DH domain; the sequence is QQIIEESFNG…FRRYPRILLN (311 aa). Residue H1376 is the Proton acceptor; for dehydratase activity of the active site. Residues 1506-1654 are C-terminal hotdog fold; the sequence is IANRFTRNMA…FRRYPRILLN (149 aa). The active-site Proton donor; for dehydratase activity is D1565. The segment at 1668–1726 is disordered; sequence HAAASSTPAPRTKPEPVPVATPATAAAPVAQSPAAPASVTPAPAPAPAPGPTPAAAPAA. The span at 1685-1708 shows a compositional bias: low complexity; sequence PVATPATAAAPVAQSPAAPASVTP. The span at 1709 to 1721 shows a compositional bias: pro residues; sequence APAPAPAPGPTPA. Residues 1728–1805 form the Carrier domain; sequence GESDSVAAKA…DLRSWLLEYY (78 aa). O-(pantetheine 4'-phosphoryl)serine is present on S1765.

It carries out the reaction holo-[ACP] + 8 malonyl-CoA + 8 H(+) = atrochrysone carboxyl-[ACP] + 8 CO2 + 8 CoA + 2 H2O. It functions in the pathway secondary metabolite biosynthesis. Functionally, atrochrysone carboxylic acid synthase; part of the gene cluster that mediates the biosynthesis of monodictyphenone, a prenyl xanthone derivative. The pathway begins with the synthesis of atrochrysone thioester by the polyketide synthase (PKS) mdpG. The atrochrysone carboxyl ACP thioesterase mdpF then breaks the thioester bond and releases the atrochrysone carboxylic acid from mdpG. The atrochrysone carboxylic acid is then converted to atrochrysone which is further transformed into emodin anthrone. The next step is performed by the anthrone oxygenase mdpH that catalyzes the oxidation of emodinanthrone to emodin. Emodin is further modified to yield monodictyphenone via several steps involving mdpB, mdpC mdpJ, mdpK and mdpL. The short chain dehydrogenase mdpC converts the tautomers of emodin hydroquinone into the 3-hydroxy-3,4-dihydroan-thracen-1(2H)-one derivative. These enzymes with xptA, xptB and xptC are also proposed to be involved in the synthesis of shamixanthone from emodin. Especially, direct reduction of emodin by the short chain dehydrogenase mdpC followed by dehydration catalyzed by the scytalone dehydratase-like protein mdpB gives loss of oxygen and formation of chrysophanol intermediate in two simple steps. This Emericella nidulans (strain FGSC A4 / ATCC 38163 / CBS 112.46 / NRRL 194 / M139) (Aspergillus nidulans) protein is Atrochrysone carboxylic acid synthase.